Consider the following 313-residue polypeptide: Porphobilinogen deaminase (313 aa).

S-(dipyrrolylmethanemethyl)cysteine is present on Cys-242.

It belongs to the HMBS family. As to quaternary structure, monomer. The cofactor is dipyrromethane.

The catalysed reaction is 4 porphobilinogen + H2O = hydroxymethylbilane + 4 NH4(+). The protein operates within porphyrin-containing compound metabolism; protoporphyrin-IX biosynthesis; coproporphyrinogen-III from 5-aminolevulinate: step 2/4. Functionally, tetrapolymerization of the monopyrrole PBG into the hydroxymethylbilane pre-uroporphyrinogen in several discrete steps. This is Porphobilinogen deaminase from Klebsiella pneumoniae (strain 342).